A 146-amino-acid chain; its full sequence is Protein MGF 100-3L (146 aa).

This sequence belongs to the asfivirus MGF 100 family.

Plays a role in virus cell tropism, and may be required for efficient virus replication in macrophages. The protein is Protein MGF 100-3L of Ornithodoros (relapsing fever ticks).